A 545-amino-acid chain; its full sequence is Glucose-6-phosphate isomerase 1 (545 aa).

Glu-356 acts as the Proton donor in catalysis. Active-site residues include His-387 and Lys-508.

Belongs to the GPI family.

It localises to the cytoplasm. The enzyme catalyses alpha-D-glucose 6-phosphate = beta-D-fructose 6-phosphate. It participates in carbohydrate biosynthesis; gluconeogenesis. It functions in the pathway carbohydrate degradation; glycolysis; D-glyceraldehyde 3-phosphate and glycerone phosphate from D-glucose: step 2/4. Its function is as follows. Catalyzes the reversible isomerization of glucose-6-phosphate to fructose-6-phosphate. This Cupriavidus pinatubonensis (strain JMP 134 / LMG 1197) (Cupriavidus necator (strain JMP 134)) protein is Glucose-6-phosphate isomerase 1.